The following is a 366-amino-acid chain: S-adenosylmethionine:tRNA ribosyltransferase-isomerase (366 aa).

This sequence belongs to the QueA family. In terms of assembly, monomer.

Its subcellular location is the cytoplasm. It carries out the reaction 7-aminomethyl-7-carbaguanosine(34) in tRNA + S-adenosyl-L-methionine = epoxyqueuosine(34) in tRNA + adenine + L-methionine + 2 H(+). The protein operates within tRNA modification; tRNA-queuosine biosynthesis. In terms of biological role, transfers and isomerizes the ribose moiety from AdoMet to the 7-aminomethyl group of 7-deazaguanine (preQ1-tRNA) to give epoxyqueuosine (oQ-tRNA). The chain is S-adenosylmethionine:tRNA ribosyltransferase-isomerase from Bradyrhizobium diazoefficiens (strain JCM 10833 / BCRC 13528 / IAM 13628 / NBRC 14792 / USDA 110).